Reading from the N-terminus, the 306-residue chain is D-alanine--D-alanine ligase (306 aa).

The region spanning 101–303 is the ATP-grasp domain; the sequence is KYLWQGCGLP…FSQLVARILE (203 aa). Residue 134–189 participates in ATP binding; it reads IDALGLPLFVKPSREGSSVGISRVNQASELQAALQEAFRFDDEVLVEAFLSGPEYT. Asp257, Glu270, and Asn272 together coordinate Mg(2+).

This sequence belongs to the D-alanine--D-alanine ligase family. Mg(2+) serves as cofactor. Mn(2+) is required as a cofactor.

It localises to the cytoplasm. It catalyses the reaction 2 D-alanine + ATP = D-alanyl-D-alanine + ADP + phosphate + H(+). It functions in the pathway cell wall biogenesis; peptidoglycan biosynthesis. Functionally, cell wall formation. The polypeptide is D-alanine--D-alanine ligase (Erwinia tasmaniensis (strain DSM 17950 / CFBP 7177 / CIP 109463 / NCPPB 4357 / Et1/99)).